A 388-amino-acid chain; its full sequence is Succinate--CoA ligase [ADP-forming] subunit beta (388 aa).

The region spanning 9–244 (KALFAEYGLP…PSQDDAREAH (236 aa)) is the ATP-grasp domain. Residues lysine 46, 53–55 (GRG), glutamate 99, threonine 102, and glutamate 107 each bind ATP. Residues asparagine 199 and aspartate 213 each contribute to the Mg(2+) site. Substrate-binding positions include asparagine 264 and 321 to 323 (GIV).

It belongs to the succinate/malate CoA ligase beta subunit family. As to quaternary structure, heterotetramer of two alpha and two beta subunits. The cofactor is Mg(2+).

It catalyses the reaction succinate + ATP + CoA = succinyl-CoA + ADP + phosphate. The enzyme catalyses GTP + succinate + CoA = succinyl-CoA + GDP + phosphate. It functions in the pathway carbohydrate metabolism; tricarboxylic acid cycle; succinate from succinyl-CoA (ligase route): step 1/1. Functionally, succinyl-CoA synthetase functions in the citric acid cycle (TCA), coupling the hydrolysis of succinyl-CoA to the synthesis of either ATP or GTP and thus represents the only step of substrate-level phosphorylation in the TCA. The beta subunit provides nucleotide specificity of the enzyme and binds the substrate succinate, while the binding sites for coenzyme A and phosphate are found in the alpha subunit. The polypeptide is Succinate--CoA ligase [ADP-forming] subunit beta (Shewanella amazonensis (strain ATCC BAA-1098 / SB2B)).